The following is a 246-amino-acid chain: 3-deoxy-manno-octulosonate cytidylyltransferase (246 aa).

The protein belongs to the KdsB family.

The protein resides in the cytoplasm. The catalysed reaction is 3-deoxy-alpha-D-manno-oct-2-ulosonate + CTP = CMP-3-deoxy-beta-D-manno-octulosonate + diphosphate. The protein operates within nucleotide-sugar biosynthesis; CMP-3-deoxy-D-manno-octulosonate biosynthesis; CMP-3-deoxy-D-manno-octulosonate from 3-deoxy-D-manno-octulosonate and CTP: step 1/1. It functions in the pathway bacterial outer membrane biogenesis; lipopolysaccharide biosynthesis. Functionally, activates KDO (a required 8-carbon sugar) for incorporation into bacterial lipopolysaccharide in Gram-negative bacteria. The chain is 3-deoxy-manno-octulosonate cytidylyltransferase from Chloroherpeton thalassium (strain ATCC 35110 / GB-78).